Reading from the N-terminus, the 473-residue chain is Exodeoxyribonuclease I (473 aa).

The Exonuclease domain occupies Ile9 to Ala188. Residues Asp11, Glu13, and Asp182 each contribute to the Mg(2+) site. Glu13 is a substrate binding site. One can recognise an ExoI SH3-like domain in the interval Pro198–Arg353. Positions Ala356–Leu472 constitute an ExoI C-terminal domain.

As to quaternary structure, monomer. Interacts with ssb (via C-terminus); this interaction stimulates the exonuclease activity by recruiting the enzyme to its substrate. Mg(2+) serves as cofactor.

The catalysed reaction is Exonucleolytic cleavage in the 3'- to 5'-direction to yield nucleoside 5'-phosphates.. In terms of biological role, degrades single-stranded DNA (ssDNA) in a highly processive manner. Also functions as a DNA deoxyribophosphodiesterase that releases deoxyribose-phosphate moieties following the cleavage of DNA at an apurinic/apyrimidinic (AP) site by either an AP endonuclease or AP lyase. Involved in genome maintenance but probably not in phase variation, which contributes to the virulence and disease. This Haemophilus influenzae (strain ATCC 51907 / DSM 11121 / KW20 / Rd) protein is Exodeoxyribonuclease I (sbcB).